We begin with the raw amino-acid sequence, 176 residues long: Cytochrome b561 homolog 1 (176 aa).

Residues Met-1–Thr-7 lie on the Cytoplasmic side of the membrane. A helical transmembrane segment spans residues Gln-8 to Leu-28. Heme b is bound at residue His-12. Topologically, residues Arg-29–Thr-45 are periplasmic. His-46 is a binding site for heme b. The chain crosses the membrane as a helical span at residues His-46–Ile-63. Over Lys-64–Ser-85 the chain is Cytoplasmic. The chain crosses the membrane as a helical span at residues Leu-86–Met-106. Topologically, residues Ala-107–Trp-141 are periplasmic. Heme b contacts are provided by His-138 and His-152. The chain crosses the membrane as a helical span at residues Ala-142–Ile-162. The Cytoplasmic segment spans residues Gln-163–Lys-176.

It belongs to the cytochrome b561 family. Heme b is required as a cofactor.

It localises to the cell inner membrane. This is Cytochrome b561 homolog 1 (yodB) from Escherichia coli (strain K12).